The following is a 100-amino-acid chain: MIREERLLKVLRAPHVSEKASTAMEKTNTIVLKVAKDATKAEIKAAVQKLFEVEVEVVNTLVVKGKVKRHGQRIGRRSDWKKAYVTLKEGQNLDFVGGAE.

This sequence belongs to the universal ribosomal protein uL23 family. Part of the 50S ribosomal subunit. Contacts protein L29, and trigger factor when it is bound to the ribosome.

Its function is as follows. One of the early assembly proteins it binds 23S rRNA. One of the proteins that surrounds the polypeptide exit tunnel on the outside of the ribosome. Forms the main docking site for trigger factor binding to the ribosome. This is Large ribosomal subunit protein uL23 from Salmonella paratyphi A (strain ATCC 9150 / SARB42).